The sequence spans 545 residues: Chaperonin GroEL (545 aa).

ATP contacts are provided by residues 29 to 32 (TMGP), Lys50, 86 to 90 (DGTTT), Gly414, 477 to 479 (DAA), and Asp493.

The protein belongs to the chaperonin (HSP60) family. In terms of assembly, forms a cylinder of 14 subunits composed of two heptameric rings stacked back-to-back. Interacts with the co-chaperonin GroES.

It is found in the cytoplasm. The enzyme catalyses ATP + H2O + a folded polypeptide = ADP + phosphate + an unfolded polypeptide.. In terms of biological role, together with its co-chaperonin GroES, plays an essential role in assisting protein folding. The GroEL-GroES system forms a nano-cage that allows encapsulation of the non-native substrate proteins and provides a physical environment optimized to promote and accelerate protein folding. In Campylobacter jejuni subsp. jejuni serotype O:2 (strain ATCC 700819 / NCTC 11168), this protein is Chaperonin GroEL.